The chain runs to 363 residues: MGFSAPLSKDQASLLDERSREIFRRIVEGYLDTGEPLGSRSLSRLLPMSLSPASVRNVMSDLEELGLIYSPHISAGRLPTQTGLRFFVDAFMQVGDLPADERANIDRQIGPVAGHEQSLEGLLTEASRMLSGMSRGAGLVLTAKNDVILKHVEFIRLEPTKALAVLVGDHNQVENRIIELPAGISSSQLTEAANFINAHLSGQTLQELRGQFQTQRTELQSELGMLAQDLVERGLAIWAGDNEEGKLGRLIVRGRSNLLEGLAGEEDIDRVRMLFDDLERKENLIEILNLAESGSGVRIFIGSENKLFSLSGSSLIVAPYRDEENRVVGAVGVIGPTRLNYARIVPMVDYTAQIMARLSRKQR.

Belongs to the HrcA family.

Negative regulator of class I heat shock genes (grpE-dnaK-dnaJ and groELS operons). Prevents heat-shock induction of these operons. The protein is Heat-inducible transcription repressor HrcA of Rhizobium radiobacter (Agrobacterium tumefaciens).